The sequence spans 118 residues: Small ribosomal subunit protein uS13 (118 aa).

The tract at residues 94–118 (GLPVRGQRTKTNARTRKGPRKPIRK) is disordered.

The protein belongs to the universal ribosomal protein uS13 family. As to quaternary structure, part of the 30S ribosomal subunit. Forms a loose heterodimer with protein S19. Forms two bridges to the 50S subunit in the 70S ribosome.

Functionally, located at the top of the head of the 30S subunit, it contacts several helices of the 16S rRNA. In the 70S ribosome it contacts the 23S rRNA (bridge B1a) and protein L5 of the 50S subunit (bridge B1b), connecting the 2 subunits; these bridges are implicated in subunit movement. Contacts the tRNAs in the A and P-sites. The sequence is that of Small ribosomal subunit protein uS13 from Pseudomonas aeruginosa (strain LESB58).